The chain runs to 128 residues: Aspartate 1-decarboxylase (128 aa).

Catalysis depends on Ser25, which acts as the Schiff-base intermediate with substrate; via pyruvic acid. A Pyruvic acid (Ser) modification is found at Ser25. Substrate is bound at residue Thr57. Tyr58 functions as the Proton donor in the catalytic mechanism. 73 to 75 lines the substrate pocket; sequence GSA.

Belongs to the PanD family. In terms of assembly, heterooctamer of four alpha and four beta subunits. It depends on pyruvate as a cofactor. In terms of processing, is synthesized initially as an inactive proenzyme, which is activated by self-cleavage at a specific serine bond to produce a beta-subunit with a hydroxyl group at its C-terminus and an alpha-subunit with a pyruvoyl group at its N-terminus.

It is found in the cytoplasm. It carries out the reaction L-aspartate + H(+) = beta-alanine + CO2. Its pathway is cofactor biosynthesis; (R)-pantothenate biosynthesis; beta-alanine from L-aspartate: step 1/1. In terms of biological role, catalyzes the pyruvoyl-dependent decarboxylation of aspartate to produce beta-alanine. This is Aspartate 1-decarboxylase from Burkholderia lata (strain ATCC 17760 / DSM 23089 / LMG 22485 / NCIMB 9086 / R18194 / 383).